A 135-amino-acid chain; its full sequence is Large ribosomal subunit protein uL16c (135 aa).

Belongs to the universal ribosomal protein uL16 family. In terms of assembly, part of the 50S ribosomal subunit.

Its subcellular location is the plastid. It is found in the chloroplast. The sequence is that of Large ribosomal subunit protein uL16c from Nandina domestica (Heavenly bamboo).